The primary structure comprises 295 residues: MKPTAFDYIRPTSLPEALAILAEHSDDVAILAGGQSLMPLLNFRMSRPALVLDINDISELQQVRCENDTLYVGSMVRHCRVEQEEIFRSTIPLMSEAMTSVAHIQIKTRGTLGGNLCNAHPASEMPAVITALGASMVCKSEKRGERVLTPEEFFEGALQNGLQSDELLCEIRIPVPSQYVGWAFEEVARRHGDFAQCGAAVLIGAEDRKIDYARIALCSIGETPIRFHALEQWLIGRPVGNDLPADVKLHCREILDVAEDSTMTAENRAKLASAVTSRAIARAADRIVHLDVKRG.

The region spanning methionine 1–glutamine 178 is the FAD-binding PCMH-type domain. FAD contacts are provided by residues alanine 32–serine 36 and threonine 111–asparagine 115.

Heterotrimer composed of an alpha (CdhA), a beta (CdhB) and a gamma (CdhC) subunit.

It catalyses the reaction caffeine + a ubiquinone + H2O = 1,3,7-trimethylurate + a ubiquinol. The catalysed reaction is ubiquinone-0 + caffeine + H2O = ubiquinol-0 + 1,3,7-trimethylurate. The enzyme catalyses theobromine + a ubiquinone + H2O = 3,7-dimethylurate + a ubiquinol. Component of the caffeine dehydrogenase complex that catalyzes the hydrolytical oxidation of 1,3,7-trimethylxanthine (caffeine) by incorporation of an oxygen atom originating from a water molecule into position C-8 to produce 1,3,7-trimethyluric acid (TMU). Coenzyme Q0 (ubiquinone-0) is the preferred electron acceptor and, to a lesser extent, coenzyme Q2 (ubiquinone-2) can also be used, but oxygen and NAD(P)(+) cannot. Is involved in a caffeine degradation pathway that allows Pseudomonas sp. strain CBB1 to grow on caffeine as the sole carbon and nitrogen source. Is also active with theobromine as substrate, but shows a very poor activity with theophylline and is not active with xanthine, 3-methylxanthine, 7-methylxanthine, TMU, and 3,7-dimethylurate. This is Caffeine dehydrogenase subunit beta from Pseudomonas sp. (strain CBB1).